The chain runs to 115 residues: Nucleoid-associated protein LA_4332 (115 aa).

The protein belongs to the YbaB/EbfC family. Homodimer.

It localises to the cytoplasm. Its subcellular location is the nucleoid. Its function is as follows. Binds to DNA and alters its conformation. May be involved in regulation of gene expression, nucleoid organization and DNA protection. The protein is Nucleoid-associated protein LA_4332 of Leptospira interrogans serogroup Icterohaemorrhagiae serovar Lai (strain 56601).